We begin with the raw amino-acid sequence, 192 residues long: Peptidyl-tRNA hydrolase (192 aa).

Tyr-17 contacts tRNA. His-22 serves as the catalytic Proton acceptor. Residues Phe-67, Asn-69, and Asn-115 each coordinate tRNA.

Belongs to the PTH family. In terms of assembly, monomer.

It localises to the cytoplasm. The enzyme catalyses an N-acyl-L-alpha-aminoacyl-tRNA + H2O = an N-acyl-L-amino acid + a tRNA + H(+). Hydrolyzes ribosome-free peptidyl-tRNAs (with 1 or more amino acids incorporated), which drop off the ribosome during protein synthesis, or as a result of ribosome stalling. Functionally, catalyzes the release of premature peptidyl moieties from peptidyl-tRNA molecules trapped in stalled 50S ribosomal subunits, and thus maintains levels of free tRNAs and 50S ribosomes. This chain is Peptidyl-tRNA hydrolase, found in Methylobacillus flagellatus (strain ATCC 51484 / DSM 6875 / VKM B-1610 / KT).